Here is a 189-residue protein sequence, read N- to C-terminus: Large ribosomal subunit protein bL9 (189 aa).

This sequence belongs to the bacterial ribosomal protein bL9 family.

In terms of biological role, binds to the 23S rRNA. The chain is Large ribosomal subunit protein bL9 from Cereibacter sphaeroides (strain ATCC 17025 / ATH 2.4.3) (Rhodobacter sphaeroides).